The sequence spans 154 residues: Protein X (154 aa).

The segment at 68–117 (PCALRFTSARRMETTVNAHQFLPKVLHKRTLGLSVMSTTDLEAYFKDCLF) is mitochondrial targeting sequence.

Belongs to the orthohepadnavirus protein X family. In terms of assembly, may form homodimer. May interact with host CEBPA, CFLAR, CREB1, DDB1, E4F1, HBXIP, HSPD1/HSP60, NFKBIA, POLR2E and SMAD4. Interacts with host SMC5-SMC6 complex and induces its degradation. Interacts with host TRPC4AP; leading to prevent ubiquitination of TRPC4AP. Interacts with host PLSCR1; this interaction promotes ubiquitination and degradation of HBx and impairs HBx-mediated cell proliferation. Post-translationally, a fraction may be phosphorylated in insect cells and HepG2 cells, a human hepatoblastoma cell line. Phosphorylated in vitro by host protein kinase C or mitogen-activated protein kinase. N-acetylated in insect cells.

The protein resides in the host cytoplasm. Its subcellular location is the host nucleus. It is found in the host mitochondrion. Multifunctional protein that plays a role in silencing host antiviral defenses and promoting viral transcription. Does not seem to be essential for HBV infection. May be directly involved in development of cirrhosis and liver cancer (hepatocellular carcinoma). Most of cytosolic activities involve modulation of cytosolic calcium. The effect on apoptosis is controversial depending on the cell types in which the studies have been conducted. May induce apoptosis by localizing in mitochondria and causing loss of mitochondrial membrane potential. May also modulate apoptosis by binding host CFLAR, a key regulator of the death-inducing signaling complex (DISC). Promotes viral transcription by using the host E3 ubiquitin ligase DDB1 to target the SMC5-SMC6 complex to proteasomal degradation. This host complex would otherwise bind to viral episomal DNA, and prevents its transcription. Moderately stimulates transcription of many different viral and cellular transcription elements. Promoters and enhancers stimulated by HBx contain DNA binding sites for NF-kappa-B, AP-1, AP-2, c-EBP, ATF/CREB, or the calcium-activated factor NF-AT. The sequence is that of Protein X from Hepatitis B virus genotype D (isolate France/alpha1/1989) (HBV-D).